Here is a 484-residue protein sequence, read N- to C-terminus: tRNA sulfurtransferase (484 aa).

In terms of domain architecture, THUMP spans 63-167 (QAFGERLACI…RDNLYMVTKR (105 aa)). ATP is bound by residues 185-186 (LI), Lys-267, Gly-289, and Gln-298. A disulfide bridge connects residues Cys-346 and Cys-458. The Rhodanese domain maps to 406–484 (IDTNQVVIDI…GYTNVKVYRP (79 aa)). The Cysteine persulfide intermediate role is filled by Cys-458.

Belongs to the ThiI family.

It localises to the cytoplasm. The enzyme catalyses [ThiI sulfur-carrier protein]-S-sulfanyl-L-cysteine + a uridine in tRNA + 2 reduced [2Fe-2S]-[ferredoxin] + ATP + H(+) = [ThiI sulfur-carrier protein]-L-cysteine + a 4-thiouridine in tRNA + 2 oxidized [2Fe-2S]-[ferredoxin] + AMP + diphosphate. The catalysed reaction is [ThiS sulfur-carrier protein]-C-terminal Gly-Gly-AMP + S-sulfanyl-L-cysteinyl-[cysteine desulfurase] + AH2 = [ThiS sulfur-carrier protein]-C-terminal-Gly-aminoethanethioate + L-cysteinyl-[cysteine desulfurase] + A + AMP + 2 H(+). The protein operates within cofactor biosynthesis; thiamine diphosphate biosynthesis. Catalyzes the ATP-dependent transfer of a sulfur to tRNA to produce 4-thiouridine in position 8 of tRNAs, which functions as a near-UV photosensor. Also catalyzes the transfer of sulfur to the sulfur carrier protein ThiS, forming ThiS-thiocarboxylate. This is a step in the synthesis of thiazole, in the thiamine biosynthesis pathway. The sulfur is donated as persulfide by IscS. The chain is tRNA sulfurtransferase from Shewanella baltica (strain OS155 / ATCC BAA-1091).